A 467-amino-acid chain; its full sequence is Asparagine--tRNA ligase (467 aa).

Belongs to the class-II aminoacyl-tRNA synthetase family. Homodimer.

The protein localises to the cytoplasm. It catalyses the reaction tRNA(Asn) + L-asparagine + ATP = L-asparaginyl-tRNA(Asn) + AMP + diphosphate + H(+). The chain is Asparagine--tRNA ligase from Protochlamydia amoebophila (strain UWE25).